The chain runs to 401 residues: Argininosuccinate synthase (401 aa).

Residues 10 to 18 (AYSGGVDTS) and Ala-38 each bind ATP. Tyr-89 is an L-citrulline binding site. Gly-119 serves as a coordination point for ATP. L-aspartate is bound by residues Thr-121, Asn-125, and Asp-126. Asn-125 is an L-citrulline binding site. Residues Arg-129, Ser-177, Ser-186, Glu-262, and Tyr-274 each coordinate L-citrulline.

It belongs to the argininosuccinate synthase family. Type 1 subfamily. In terms of assembly, homotetramer.

The protein localises to the cytoplasm. The enzyme catalyses L-citrulline + L-aspartate + ATP = 2-(N(omega)-L-arginino)succinate + AMP + diphosphate + H(+). It functions in the pathway amino-acid biosynthesis; L-arginine biosynthesis; L-arginine from L-ornithine and carbamoyl phosphate: step 2/3. This chain is Argininosuccinate synthase, found in Synechococcus sp. (strain CC9311).